A 461-amino-acid polypeptide reads, in one-letter code: Smoothelin-like protein 2 (461 aa).

Residues 55 to 88 (PLARTVADLQRDNQRLQAQLERLTRQVEALGLAS) are a coiled coil. Disordered stretches follow at residues 87-193 (ASGM…LRLP) and 227-248 (LNPS…KNSS). Residues 94–107 (PGTPGTPSPPPAPG) are compositionally biased toward pro residues. T96 bears the Phosphothreonine mark. Phosphoserine occurs at positions 101, 129, and 134. Over residues 134–147 (SLDHDEASESEMRK) the composition is skewed to basic and acidic residues. 2 positions are modified to phosphoserine: S256 and S269. Residues 260-307 (AVTASKHSNSPPLVTPPQSPVSPQPPAITQVHRQGERRRELVRSQTLP) are disordered. Over residues 272-285 (LVTPPQSPVSPQPP) the composition is skewed to pro residues. A Phosphothreonine modification is found at T274. S278 carries the post-translational modification Phosphoserine. The span at 292 to 301 (RQGERRRELV) shows a compositional bias: basic and acidic residues. At S344 the chain carries Phosphoserine. The 108-residue stretch at 351-458 (SSIKQILLEW…YVQSLYNHLR (108 aa)) folds into the Calponin-homology (CH) domain.

The protein belongs to the smoothelin family.

This Homo sapiens (Human) protein is Smoothelin-like protein 2 (SMTNL2).